Reading from the N-terminus, the 1006-residue chain is MAEQESLEFGKADFVLMDTVSMPEFMANLRLRFEKGRIYTFIGEVVVSVNPYKLLNIYGRDTIEQYKGRELYERPPHLFAIADAAYKAMKRRSKDTCIVISGESGAGKTEASKYIMQYIAAITNPSQRAEVERVKNMLLKSNCVLEAFGNAKTNRNDNSSRFGKYMDINFDFKGDPIGGHINNYLLEKSRVIVQQPGERSFHSFYQLLQGGSEQMLRSLHLQKSLSSYNYIHVGAQLKSSINDAAEFRVVADAMKVIGFKPEEIQTVYKILAAILHLGNLKFVVDGDTPLIENGKVVSIIAELLSTKTDMVEKALLYRTVATGRDIIDKQHTEQEASYGRDAFAKAIYERLFCWIVTRINDIIEVKNYDTTIHGKNTVIGVLDIYGFEIFDNNSFEQFCINYCNEKLQQLFIQLVLKQEQEEYQREGIPWKHIDYFNNQIIVDLVEQQHKGIIAILDDACMNVGKVTDEMFLEALNSKLGKHAHFSSRKLCASDKILEFDRDFRIRHYAGDVVYSVIGFIDKNKDTLFQDFKRLMYNSSNPVLKNMWPEGKLSITEVTKRPLTAATLFKNSMIALVDNLASKEPYYVRCIKPNDKKSPQIFDDERCRHQVEYLGLLENVRVRRAGFAFRQTYEKFLHRYKMISEFTWPNHDLPSDKEAVKKLIERCGFQDDVAYGKTKIFIRTPRTLFTLEELRAQMLIRIVLFLQKVWRGTLARMRYKRTKAALTIIRYYRRYKVKSYIHEVARRFHGVKTMRDYGKHVKWPSPPKVLRRFEEALQTIFNRWRASQLIKSIPASDLPQVRAKVAAVEMLKGQRADLGLQRAWEGNYLASKPDTPQTSGTFVPVANELKRKDKYMNVLFSCHVRKVNRFSKVEDRAIFVTDRHLYKMDPTKQYKVMKTIPLYNLTGLSVSNGKDQLVVFHTKDNKDLIVCLFSKQPTHESRIGELVGVLVNHFKSEKRHLQVNVTNPVQCSLHGKKCTVSVETRLNQPQPDFTKNRSGFILSVPGN.

Position 2 is an N-acetylalanine (alanine 2). The Myosin motor domain maps to 9-695 (FGKADFVLMD…TLFTLEELRA (687 aa)). ATP is bound at residue 102 to 109 (GESGAGKT). Serine 200 carries the phosphoserine modification. A Phosphotyrosine modification is found at tyrosine 536. An actin-binding region spans residues 572–594 (MIALVDNLASKEPYYVRCIKPND). IQ domains lie at 699 to 719 (IRIV…MRYK) and 721 to 741 (TKAA…SYIH). The TH1 domain occupies 812-1005 (GQRADLGLQR…RSGFILSVPG (194 aa)).

It belongs to the TRAFAC class myosin-kinesin ATPase superfamily. Myosin family. As to quaternary structure, interacts (via the two IQ motifs) with calmodulin. Binds an additional calmodulin chain via a third, C-terminal region. Interacts with F-actin. Expressed in many tissues. Highest levels in brain, followed by lung and ovary; expression is lowest in spleen.

It is found in the cytoplasm. Its subcellular location is the perikaryon. The protein resides in the cell projection. The protein localises to the dendrite. It localises to the early endosome. It is found in the cell cortex. Its function is as follows. Unconventional myosin that functions as actin-based motor protein with ATPase activity. Plays a role in endosomal protein trafficking, and especially in the transfer of cargo proteins from early to recycling endosomes. Required for normal planar cell polarity in ciliated tracheal cells, for normal rotational polarity of cilia, and for coordinated, unidirectional ciliary movement in the trachea. Required for normal, polarized cilia organization in brain ependymal epithelial cells. This is Unconventional myosin-Id (MYO1D) from Homo sapiens (Human).